The primary structure comprises 114 residues: Holo-[acyl-carrier-protein] synthase (114 aa).

Mg(2+) contacts are provided by Asp8 and Glu58.

Belongs to the P-Pant transferase superfamily. AcpS family. Requires Mg(2+) as cofactor.

The protein resides in the cytoplasm. It catalyses the reaction apo-[ACP] + CoA = holo-[ACP] + adenosine 3',5'-bisphosphate + H(+). In terms of biological role, transfers the 4'-phosphopantetheine moiety from coenzyme A to a Ser of acyl-carrier-protein. This chain is Holo-[acyl-carrier-protein] synthase, found in Mycoplasma genitalium (strain ATCC 33530 / DSM 19775 / NCTC 10195 / G37) (Mycoplasmoides genitalium).